Reading from the N-terminus, the 129-residue chain is Transcriptional regulator WhiB2 (129 aa).

Positions 23-45 (SHAPHIDTGSTPTGAAGRPQLSL) are disordered. The 58-residue stretch at 66-123 (LCAQTDPEAFFPEKGGSTREAKRICQGCEVRDACLEYALAHDERFGIWGGLSERERRR) folds into the 4Fe-4S Wbl-type domain. [4Fe-4S] cluster contacts are provided by cysteine 67, cysteine 90, cysteine 93, and cysteine 99.

The protein belongs to the WhiB family. The cofactor is [4Fe-4S] cluster. Post-translationally, the Fe-S cluster can be nitrosylated by nitric oxide (NO). In terms of processing, upon Fe-S cluster removal intramolecular disulfide bonds are formed.

Its subcellular location is the cytoplasm. Acts as a transcriptional regulator. Probably redox-responsive. The apo- but not holo-form probably binds DNA. The protein is Transcriptional regulator WhiB2 (whiB2) of Mycolicibacterium smegmatis (strain ATCC 700084 / mc(2)155) (Mycobacterium smegmatis).